The primary structure comprises 406 residues: Multifunctional CCA protein (406 aa).

Residues G8 and R11 each coordinate ATP. Residues G8 and R11 each coordinate CTP. Residues D21 and D23 each coordinate Mg(2+). Residues R91, R137, and R140 each coordinate ATP. Residues R91, R137, and R140 each contribute to the CTP site. Positions T228–W329 constitute an HD domain.

Belongs to the tRNA nucleotidyltransferase/poly(A) polymerase family. Bacterial CCA-adding enzyme type 1 subfamily. As to quaternary structure, monomer. Can also form homodimers and oligomers. Requires Mg(2+) as cofactor. Ni(2+) serves as cofactor.

It catalyses the reaction a tRNA precursor + 2 CTP + ATP = a tRNA with a 3' CCA end + 3 diphosphate. It carries out the reaction a tRNA with a 3' CCA end + 2 CTP + ATP = a tRNA with a 3' CCACCA end + 3 diphosphate. In terms of biological role, catalyzes the addition and repair of the essential 3'-terminal CCA sequence in tRNAs without using a nucleic acid template. Adds these three nucleotides in the order of C, C, and A to the tRNA nucleotide-73, using CTP and ATP as substrates and producing inorganic pyrophosphate. tRNA 3'-terminal CCA addition is required both for tRNA processing and repair. Also involved in tRNA surveillance by mediating tandem CCA addition to generate a CCACCA at the 3' terminus of unstable tRNAs. While stable tRNAs receive only 3'-terminal CCA, unstable tRNAs are marked with CCACCA and rapidly degraded. This chain is Multifunctional CCA protein, found in Vibrio campbellii (strain ATCC BAA-1116).